The primary structure comprises 225 residues: NAD(P)H-quinone oxidoreductase subunit K, chloroplastic (225 aa).

C43, C44, C108, and C139 together coordinate [4Fe-4S] cluster.

This sequence belongs to the complex I 20 kDa subunit family. NDH is composed of at least 16 different subunits, 5 of which are encoded in the nucleus. [4Fe-4S] cluster is required as a cofactor.

The protein localises to the plastid. The protein resides in the chloroplast thylakoid membrane. The enzyme catalyses a plastoquinone + NADH + (n+1) H(+)(in) = a plastoquinol + NAD(+) + n H(+)(out). It catalyses the reaction a plastoquinone + NADPH + (n+1) H(+)(in) = a plastoquinol + NADP(+) + n H(+)(out). In terms of biological role, NDH shuttles electrons from NAD(P)H:plastoquinone, via FMN and iron-sulfur (Fe-S) centers, to quinones in the photosynthetic chain and possibly in a chloroplast respiratory chain. The immediate electron acceptor for the enzyme in this species is believed to be plastoquinone. Couples the redox reaction to proton translocation, and thus conserves the redox energy in a proton gradient. In Lactuca sativa (Garden lettuce), this protein is NAD(P)H-quinone oxidoreductase subunit K, chloroplastic.